The following is a 358-amino-acid chain: MSAYCGKYKDELIKNAAYIGTPGKGILAADESTGTIGKRFASINVENVEDNRRAFRELLFCTPGALQYISGVILFDETLYQKTKDGKPFVDVLKEAGALPGIKVDKGTIEVAGTDKETTTQGHDDLGKQCAKYYEAGARFAKWRAVLKIGPNQPSQLAIDLNAQGLACYAIICQENGLVPIVEPEILVDGPHDIDRCAYVSEVVLAACYKALNEHHVLLEGTLLKPNMVTPGSDAKKVAPEVIAEYTVRTLQRTVPPAVPAIVFLSGGQSEEEATLNLNAMNKLSAKKPWSLSFSFGRALQQSTLKAWAGKTENVEKARAAFLVRCKANSEATLGTYKGDAVLGEGAAESLHVKDYKY.

A substrate-binding site is contributed by arginine 39. The Proton acceptor role is filled by glutamate 183. Catalysis depends on lysine 225, which acts as the Schiff-base intermediate with dihydroxyacetone-P. Substrate-binding positions include 266 to 268 (SGG) and arginine 298.

It belongs to the class I fructose-bisphosphate aldolase family. Homotetramer.

It is found in the cytoplasm. The protein resides in the cytosol. It carries out the reaction beta-D-fructose 1,6-bisphosphate = D-glyceraldehyde 3-phosphate + dihydroxyacetone phosphate. It participates in carbohydrate degradation; glycolysis; D-glyceraldehyde 3-phosphate and glycerone phosphate from D-glucose: step 4/4. Fructose-bisphosphate aldolase that plays a key role in glycolysis and gluconeogenesis. This is Fructose-bisphosphate aldolase 2, cytoplasmic from Oryza sativa subsp. japonica (Rice).